The following is a 377-amino-acid chain: MMIASSLAVLYGIAIVSSMGVQSARADYADDCTTPDGDQGQCMPFSSCRTIEERLTEAQKAGQKVPADYASYLQKALCGEFNGVRHFCCPSANIQHNSKVMSLFKDENFDCGNFLSQRVSNGYEVKLSSRPWMALLRYQQFGESRFLCGGAMISERYILTAAHCVHGLQNDLYEIRLGEHRISTEEDCRQQGRKKKCAPPVVNVGIEKHLIHEKYDARHIMHDIALLKLNRSVPFQKHIKPICLPITDELKEKAEQISTYFVTGWGTTENGSSSDVLLQANVPLQPRSACSQAYRRAVPLSQLCVGGGDLQDSCKGDSGGPLQAPAQYLGEYAPKMVEFGIVSQGVVTCGQISLPGLYTNVGEYVQWITDTMASNGL.

The signal sequence occupies residues 1 to 26 (MMIASSLAVLYGIAIVSSMGVQSARA). The Clip domain maps to 31–89 (DCTTPDGDQGQCMPFSSCRTIEERLTEAQKAGQKVPADYASYLQKALCGEFNGVRHFCC). Disulfide bonds link C32–C88, C42–C78, C48–C89, C111–C243, C148–C164, and C188–C197. Residues 91 to 118 (SANIQHNSKVMSLFKDENFDCGNFLSQR) form a linker region. Residues 119-373 (VSNGYEVKLS…YVQWITDTMA (255 aa)) form the Peptidase S1 domain. H163 functions as the Charge relay system in the catalytic mechanism. Residues E179, R181, T184, and D187 each contribute to the Ca(2+) site. The active-site Charge relay system is D223. Residues N230 and N270 are each glycosylated (N-linked (GlcNAc...) asparagine). Disulfide bonds link C290/C304 and C314/C349. S318 serves as the catalytic Charge relay system.

Belongs to the peptidase S1 family. CLIP subfamily. In terms of processing, proteolytically cleaved by a tryspin-like protease which is likely to activate grass.

The protein resides in the secreted. Endopeptidase. Plays a key role in innate immunity by activating the Toll pathway in response to fungal and Gram-positive bacterial infections, presumably downstream of pattern-recognition receptors (PRR), such as PGRP-SA, GNBP1 and GNBP3, and upstream of spz processing enzyme SPE. This Drosophila melanogaster (Fruit fly) protein is Serine protease grass.